The chain runs to 216 residues: Small ribosomal subunit protein uS3c (216 aa).

Residues 43–116 enclose the KH type-2 domain; that stretch reads IKNYVQKNMR…RLNIAITRVA (74 aa).

It belongs to the universal ribosomal protein uS3 family. Part of the 30S ribosomal subunit.

The protein localises to the plastid. It is found in the chloroplast. The protein is Small ribosomal subunit protein uS3c (rps3) of Drimys granadensis.